The chain runs to 93 residues: U12-lycotoxin-Ls1b (93 aa).

Residues 1 to 18 form the signal peptide; that stretch reads MKFAVILLFSLVVLAVAS. The propeptide occupies 19 to 38; the sequence is ESVEEVRREIDIEDLPEQQR.

The protein belongs to the neurotoxin 31 family. Contains 5 disulfide bonds. As to expression, expressed by the venom gland.

The protein localises to the secreted. The chain is U12-lycotoxin-Ls1b from Lycosa singoriensis (Wolf spider).